The chain runs to 227 residues: PKHD-type hydroxylase BamMC406_5004 (227 aa).

Residues 80 to 179 (QVYPPLFNRY…RVASFFWVQS (100 aa)) enclose the Fe2OG dioxygenase domain. H98, D100, and H160 together coordinate Fe cation. R170 lines the 2-oxoglutarate pocket.

It depends on Fe(2+) as a cofactor. L-ascorbate serves as cofactor.

This Burkholderia ambifaria (strain MC40-6) protein is PKHD-type hydroxylase BamMC406_5004.